We begin with the raw amino-acid sequence, 137 residues long: Large ribosomal subunit protein uL16c (137 aa).

This sequence belongs to the universal ribosomal protein uL16 family. Part of the 50S ribosomal subunit.

The protein localises to the plastid. The protein resides in the chloroplast. The polypeptide is Large ribosomal subunit protein uL16c (Rhodomonas salina (Cryptomonas salina)).